The following is a 347-amino-acid chain: Extracellular exo-alpha-(1-&gt;5)-L-arabinofuranosidase ArbA (347 aa).

A signal peptide spans M1–A31. D35 provides a ligand contact to substrate. Residue D38 is the Proton acceptor of the active site. Residues D90–H92, G115–K116, N155, S175, and E221 contribute to the substrate site. The active-site Proton donor is the E221. H291 contributes to the Ca(2+) binding site. Q316 provides a ligand contact to substrate.

This sequence belongs to the glycosyl hydrolase 43 family. In terms of assembly, homodimer.

It localises to the secreted. It carries out the reaction Hydrolysis of terminal non-reducing alpha-L-arabinofuranoside residues in alpha-L-arabinosides.. It participates in glycan metabolism; L-arabinan degradation. Functionally, involved in the degradation of arabinan and is a key enzyme in the complete degradation of the plant cell wall. Catalyzes the cleavage of the terminal alpha-(1-&gt;5)-arabinofuranosyl bonds of linear arabinan and carboxymethylarabinan to produce almost exclusively arabinotriose. The protein is Extracellular exo-alpha-(1-&gt;5)-L-arabinofuranosidase ArbA (arbA) of Cellvibrio japonicus (strain Ueda107) (Pseudomonas fluorescens subsp. cellulosa).